We begin with the raw amino-acid sequence, 322 residues long: MEERSQRRKKKRKLKKWVKVVAGLMAFLVIAAGSVGAYAFVKLNNASKEAHVSLARGEQSVKRIKEFDPGKDSFSVLLLGIDAREKNGETVDQARSDANVLVTFNRKEKTAKMLSIPRDAYVNIPGHGYDKFTHAHAYGGVDLTVKTVEEMLDIPVDYVVESNFTAFEDVVNELNGVKVTVKSDKVIQQIKKDTKGKVVLQKGTHTLDGEEALAYVRTRKADSDLLRGQRQMEVLSAIIDKSKSLSSIPAYDDIVDTMGQNLKMNLSLKDAIGLFPFITSLKSVESIQLTGYDYEPAGVYYFKLNQQKLQEVKKELQNDLGV.

The Cytoplasmic segment spans residues 1–19; sequence MEERSQRRKKKRKLKKWVK. The chain crosses the membrane as a helical; Signal-anchor for type II membrane protein span at residues 20 to 40; sequence VVAGLMAFLVIAAGSVGAYAF. At 41–322 the chain is on the extracellular side; it reads VKLNNASKEA…KKELQNDLGV (282 aa).

It belongs to the LytR/CpsA/Psr (LCP) family. Interacts with MreB.

It is found in the cell membrane. It functions in the pathway cell wall biogenesis. Its function is as follows. May catalyze the final step in cell wall teichoic acid biosynthesis, the transfer of the anionic cell wall polymers (APs) from their lipid-linked precursor to the cell wall peptidoglycan (PG). The polypeptide is Polyisoprenyl-teichoic acid--peptidoglycan teichoic acid transferase TagT (Bacillus subtilis (strain 168)).